Reading from the N-terminus, the 242-residue chain is Uridylate kinase (242 aa).

15–18 (KLSG) lines the ATP pocket. The interval 23-28 (GAEGFG) is involved in allosteric activation by GTP. Gly57 provides a ligand contact to UMP. Residues Gly58 and Arg62 each coordinate ATP. UMP is bound by residues Asp77 and 138-145 (TGNPFFTT). Residues Thr165, Tyr171, and Asp174 each coordinate ATP.

This sequence belongs to the UMP kinase family. In terms of assembly, homohexamer.

Its subcellular location is the cytoplasm. It catalyses the reaction UMP + ATP = UDP + ADP. It participates in pyrimidine metabolism; CTP biosynthesis via de novo pathway; UDP from UMP (UMPK route): step 1/1. With respect to regulation, allosterically activated by GTP. Inhibited by UTP. In terms of biological role, catalyzes the reversible phosphorylation of UMP to UDP. The polypeptide is Uridylate kinase (Photorhabdus laumondii subsp. laumondii (strain DSM 15139 / CIP 105565 / TT01) (Photorhabdus luminescens subsp. laumondii)).